Reading from the N-terminus, the 129-residue chain is Follitropin subunit beta (129 aa).

An N-terminal signal peptide occupies residues 1–18 (MKTLQFFFLFCCWKAICC). 6 disulfides stabilise this stretch: cysteine 21-cysteine 69, cysteine 35-cysteine 84, cysteine 38-cysteine 122, cysteine 46-cysteine 100, cysteine 50-cysteine 102, and cysteine 105-cysteine 112. N-linked (GlcNAc...) asparagine glycosylation is found at asparagine 25 and asparagine 42.

Belongs to the glycoprotein hormones subunit beta family. As to quaternary structure, heterodimer. The active follitropin is a heterodimer composed of an alpha chain/CGA shared with other hormones and a unique beta chain/FSHB shown here.

The protein resides in the secreted. Together with the alpha chain CGA constitutes follitropin, the follicle-stimulating hormone, and provides its biological specificity to the hormone heterodimer. Binds FSHR, a G protein-coupled receptor, on target cells to activate downstream signaling pathways. Follitropin is involved in follicle development and spermatogenesis in reproductive organs. The polypeptide is Follitropin subunit beta (FSHB) (Homo sapiens (Human)).